A 171-amino-acid polypeptide reads, in one-letter code: Small ribosomal subunit protein mS25 (171 aa).

The protein belongs to the mitochondrion-specific ribosomal protein mS25 family. In terms of assembly, component of the mitochondrial ribosome small subunit (28S) which comprises a 12S rRNA and about 30 distinct proteins.

It is found in the mitochondrion. This chain is Small ribosomal subunit protein mS25 (Mrps25), found in Mus musculus (Mouse).